The following is a 200-amino-acid chain: Recombination protein RecR (200 aa).

The C4-type zinc finger occupies 57-72 (CSECRTFTEEDTCAIC). One can recognise a Toprim domain in the interval 81–176 (GELCIVESPA…SASRIAHGVP (96 aa)).

It belongs to the RecR family.

May play a role in DNA repair. It seems to be involved in an RecBC-independent recombinational process of DNA repair. It may act with RecF and RecO. This is Recombination protein RecR from Aliivibrio salmonicida (strain LFI1238) (Vibrio salmonicida (strain LFI1238)).